The chain runs to 250 residues: Probable transcriptional regulatory protein SAV_6832 (250 aa).

This sequence belongs to the TACO1 family.

Its subcellular location is the cytoplasm. The sequence is that of Probable transcriptional regulatory protein SAV_6832 from Streptomyces avermitilis (strain ATCC 31267 / DSM 46492 / JCM 5070 / NBRC 14893 / NCIMB 12804 / NRRL 8165 / MA-4680).